Here is a 112-residue protein sequence, read N- to C-terminus: Small ribosomal subunit protein bS6 (112 aa).

The protein belongs to the bacterial ribosomal protein bS6 family.

In terms of biological role, binds together with bS18 to 16S ribosomal RNA. This is Small ribosomal subunit protein bS6 (rpsF) from Chlamydia muridarum (strain MoPn / Nigg).